Reading from the N-terminus, the 92-residue chain is Small ribosomal subunit protein bS18 (92 aa).

The protein belongs to the bacterial ribosomal protein bS18 family. As to quaternary structure, part of the 30S ribosomal subunit. Forms a tight heterodimer with protein bS6.

Its function is as follows. Binds as a heterodimer with protein bS6 to the central domain of the 16S rRNA, where it helps stabilize the platform of the 30S subunit. In Cupriavidus necator (strain ATCC 17699 / DSM 428 / KCTC 22496 / NCIMB 10442 / H16 / Stanier 337) (Ralstonia eutropha), this protein is Small ribosomal subunit protein bS18.